The chain runs to 210 residues: Large ribosomal subunit protein uL4 (210 aa).

It belongs to the universal ribosomal protein uL4 family. As to quaternary structure, part of the 50S ribosomal subunit.

Its function is as follows. One of the primary rRNA binding proteins, this protein initially binds near the 5'-end of the 23S rRNA. It is important during the early stages of 50S assembly. It makes multiple contacts with different domains of the 23S rRNA in the assembled 50S subunit and ribosome. Forms part of the polypeptide exit tunnel. The chain is Large ribosomal subunit protein uL4 (rplD) from Thermus thermophilus.